The following is a 170-amino-acid chain: RNA pyrophosphohydrolase (170 aa).

Positions 6–150 (GFRPNVGIIL…KRDVYRRALR (145 aa)) constitute a Nudix hydrolase domain. The Nudix box signature appears at 39–60 (GGINAHESPEQALYRELHEEVG).

Belongs to the Nudix hydrolase family. RppH subfamily. It depends on a divalent metal cation as a cofactor.

Its function is as follows. Accelerates the degradation of transcripts by removing pyrophosphate from the 5'-end of triphosphorylated RNA, leading to a more labile monophosphorylated state that can stimulate subsequent ribonuclease cleavage. This is RNA pyrophosphohydrolase from Cellvibrio japonicus (strain Ueda107) (Pseudomonas fluorescens subsp. cellulosa).